The sequence spans 58 residues: NADH dehydrogenase [ubiquinone] 1 beta subcomplex subunit 1 (58 aa).

The helical transmembrane segment at 11–27 (HWVHVLVPMGFVIGCYL) threads the bilayer.

Belongs to the complex I NDUFB1 subunit family. Complex I is composed of 45 different subunits.

It is found in the mitochondrion inner membrane. Functionally, accessory subunit of the mitochondrial membrane respiratory chain NADH dehydrogenase (Complex I) that is believed not to be involved in catalysis. Complex I functions in the transfer of electrons from NADH to the respiratory chain. The immediate electron acceptor for the enzyme is believed to be ubiquinone. The protein is NADH dehydrogenase [ubiquinone] 1 beta subcomplex subunit 1 (NDUFB1) of Homo sapiens (Human).